A 291-amino-acid polypeptide reads, in one-letter code: 4-hydroxy-tetrahydrodipicolinate synthase (291 aa).

T44 is a pyruvate binding site. The active-site Proton donor/acceptor is Y132. K161 serves as the catalytic Schiff-base intermediate with substrate. I202 is a pyruvate binding site.

It belongs to the DapA family. As to quaternary structure, homotetramer; dimer of dimers.

It localises to the cytoplasm. The enzyme catalyses L-aspartate 4-semialdehyde + pyruvate = (2S,4S)-4-hydroxy-2,3,4,5-tetrahydrodipicolinate + H2O + H(+). The protein operates within amino-acid biosynthesis; L-lysine biosynthesis via DAP pathway; (S)-tetrahydrodipicolinate from L-aspartate: step 3/4. Catalyzes the condensation of (S)-aspartate-beta-semialdehyde [(S)-ASA] and pyruvate to 4-hydroxy-tetrahydrodipicolinate (HTPA). The protein is 4-hydroxy-tetrahydrodipicolinate synthase of Endomicrobium trichonymphae.